The chain runs to 559 residues: AP-4 complex accessory subunit tepsin (559 aa).

The ENTH domain maps to 2–135 (LDRLAFLQQL…FSESIPSPSH (134 aa)). Disordered stretches follow at residues 131–157 (PSPS…APAL), 214–290 (AIPS…ESLD), and 472–491 (PNGA…SDPA). 2 stretches are compositionally biased toward low complexity: residues 144–154 (QSGMGSQASSA) and 266–281 (SRSS…DGQS). The segment covering 472–485 (PNGAANQKNPNGST) has biased composition (polar residues).

It is found in the golgi apparatus. Its subcellular location is the trans-Golgi network membrane. The protein resides in the cytoplasmic vesicle. The protein localises to the cytoplasm. It localises to the cytosol. May play a role in vesicular trafficking of proteins at the trans-Golgi network. This is AP-4 complex accessory subunit tepsin from Xenopus laevis (African clawed frog).